The sequence spans 96 residues: Colicin-K immunity protein (96 aa).

Residues 73–93 (ALFYLLMAIPVGLPSFIYYTL) form a helical membrane-spanning segment.

The protein localises to the cell membrane. Functionally, this protein is able to protect a cell, which harbors the plasmid ColK encoding colicin K, against colicin K. This chain is Colicin-K immunity protein (cki), found in Escherichia coli.